The following is a 582-amino-acid chain: ATP-dependent lipid A-core flippase (582 aa).

5 helical membrane-spanning segments follow: residues 16–36 (LWPTIAPFKAGLIVAGVALIL), 63–83 (VLVWMPLVVIGLMILRGITSY), 153–173 (IIGLFIMMFYYSWQLSIILIV), 253–273 (PIIQLIASLALAFVLYAASFP), and 275–295 (VMDNLTAGTITVVFSSMIALM). The ABC transmembrane type-1 domain maps to 28 to 310 (IVAGVALILN…LTNVNAQFQR (283 aa)). One can recognise an ABC transporter domain in the interval 342–578 (VEFRNVTFTY…RGVYAQLHKM (237 aa)). Residue 376 to 383 (GRSGSGKS) participates in ATP binding.

It belongs to the ABC transporter superfamily. Lipid exporter (TC 3.A.1.106) family. In terms of assembly, homodimer.

It localises to the cell inner membrane. It carries out the reaction ATP + H2O + lipid A-core oligosaccharideSide 1 = ADP + phosphate + lipid A-core oligosaccharideSide 2.. Involved in lipopolysaccharide (LPS) biosynthesis. Translocates lipid A-core from the inner to the outer leaflet of the inner membrane. Transmembrane domains (TMD) form a pore in the inner membrane and the ATP-binding domain (NBD) is responsible for energy generation. The chain is ATP-dependent lipid A-core flippase from Shigella sonnei (strain Ss046).